Here is a 1793-residue protein sequence, read N- to C-terminus: Non-reducing polyketide synthase adaA (1793 aa).

The N-terminal acylcarrier protein transacylase domain (SAT) stretch occupies residues 16-250 (NDDLKALFRG…YSKSLALPVY (235 aa)). The region spanning 388–821 (DSKLAIVGMA…GGNTTLVLED (434 aa)) is the Ketosynthase family 3 (KS3) domain. Active-site for beta-ketoacyl synthase activity residues include Cys-561, His-696, and His-739. The segment at 923–1245 (VFTFTGQGAY…KSLCTLHLAG (323 aa)) is malonyl-CoA:ACP transacylase (MAT) domain. Positions 1312–1634 (TSLIHQVTEE…RLLMDRFFSP (323 aa)) are product template (PT) domain. The segment at 1316–1452 (HQVTEETVDK…GSIKYPADPT (137 aa)) is N-terminal hotdog fold. The 314-residue stretch at 1316-1629 (HQVTEETVDK…FRRVPRLLMD (314 aa)) folds into the PKS/mFAS DH domain. Residue His-1348 is the Proton acceptor; for dehydratase activity of the active site. Residues 1482 to 1629 (KASTLSKPLA…FRRVPRLLMD (148 aa)) are C-terminal hotdog fold. Catalysis depends on Asp-1540, which acts as the Proton donor; for dehydratase activity. Over residues 1642–1659 (AAPAPAPAAVPAVKKQPP) the composition is skewed to low complexity. The interval 1642 to 1714 (AAPAPAPAAV…TTEQEAPVAD (73 aa)) is disordered. A compositionally biased stretch (polar residues) spans 1660-1681 (TETIQPQAPKTEQKQDQLQLPN). Positions 1683–1706 (ASAAPSTANSSSSPSSSGVATPTT) are enriched in low complexity. In terms of domain architecture, Carrier spans 1716 to 1793 (SAVTGVAGKC…DLTGWLEQYC (78 aa)). Ser-1753 carries the post-translational modification O-(pantetheine 4'-phosphoryl)serine.

Requires pantetheine 4'-phosphate as cofactor.

The catalysed reaction is holo-[ACP] + 9 malonyl-CoA + acetyl-CoA + 9 H(+) = 3-(2,4-dioxopentyl)-3,6,8,9-tetrahydroxy-1-oxo-1,2,3,4-tetrahydroanthracene-2-carboxyl-[ACP] + 9 CO2 + 10 CoA + 2 H2O. Its pathway is secondary metabolite biosynthesis. Non-reducing polyketide synthase; part of the gene cluster that mediates the biosynthesis of the linear tetracyclic TAN-1612 neuropeptide Y receptor antagonist. The decaketide backbone of TAN-1612 is synthesized by the non-reducing polyketide synthase adaA via condensation of one acetyl-CoA starter unit with 9 malonyl-CoA units. The FAD-dependent monooxygenase adaC then performs hydroxylation at C2 while the polaketide chain is still attached to the NRPKS adaA. The alpha-hydroxylation step at C2 appears to be crucial for the following C18-C1 Claisen cyclization and release of the C9-hydroxyl version of TAN-1612 from the NRPKS adaA, two steps performed by the lactamase-like protein adaB. Finally, the O-methyltransferase adaD performs the C9 O-methylation to complete the biosynthesis of TAN-1612. The sequence is that of Non-reducing polyketide synthase adaA from Aspergillus niger (strain ATCC MYA-4892 / CBS 513.88 / FGSC A1513).